The sequence spans 213 residues: MSDEKKPEAETSESLQKREEKLAETLASEPAAQGEAEDAAAAGPDVAALEAEISDLRNRLLRAAADMENNRKRAEREKQDAQRYAAANFARDMLEVSDNLRRAIATLKEDERAEAAESVKAMIEGVEMTDRQLVTIFERHGIREITPQPGERFDPNLHEAMFEVPGTDQPAGTVVHVLGAGYMIGDRLLRAARVGVAKADDGAAKGGKVDTIA.

The segment covering 1–23 (MSDEKKPEAETSESLQKREEKLA) has biased composition (basic and acidic residues). The segment at 1–43 (MSDEKKPEAETSESLQKREEKLAETLASEPAAQGEAEDAAAAG) is disordered. The segment covering 29 to 43 (EPAAQGEAEDAAAAG) has biased composition (low complexity).

Belongs to the GrpE family. Homodimer.

The protein localises to the cytoplasm. Its function is as follows. Participates actively in the response to hyperosmotic and heat shock by preventing the aggregation of stress-denatured proteins, in association with DnaK and GrpE. It is the nucleotide exchange factor for DnaK and may function as a thermosensor. Unfolded proteins bind initially to DnaJ; upon interaction with the DnaJ-bound protein, DnaK hydrolyzes its bound ATP, resulting in the formation of a stable complex. GrpE releases ADP from DnaK; ATP binding to DnaK triggers the release of the substrate protein, thus completing the reaction cycle. Several rounds of ATP-dependent interactions between DnaJ, DnaK and GrpE are required for fully efficient folding. The protein is Protein GrpE of Parvibaculum lavamentivorans (strain DS-1 / DSM 13023 / NCIMB 13966).